Here is a 194-residue protein sequence, read N- to C-terminus: MTAVQLIVGLGNPGPEYDQTRHNAGALFVERLAHAQGVSLVADRKYFGLVGKFSHQGKDVRLLIPTTYMNRSGQSVAALAGFFRIAPDAILVAHDELDMPPGVAKLKTGGGHGGHNGLRDIIAQLGNQNSFHRLRLGIGHPGHSSLVSGYVLGRAPRSEQELLDTSIDFALGVLPEMLAGDWTRAMQKLHSQKA.

Tyr-17 lines the tRNA pocket. Residue His-22 is the Proton acceptor of the active site. TRNA is bound by residues Tyr-68, Asn-70, and Asn-116.

It belongs to the PTH family. In terms of assembly, monomer.

Its subcellular location is the cytoplasm. It carries out the reaction an N-acyl-L-alpha-aminoacyl-tRNA + H2O = an N-acyl-L-amino acid + a tRNA + H(+). In terms of biological role, hydrolyzes ribosome-free peptidyl-tRNAs (with 1 or more amino acids incorporated), which drop off the ribosome during protein synthesis, or as a result of ribosome stalling. Functionally, catalyzes the release of premature peptidyl moieties from peptidyl-tRNA molecules trapped in stalled 50S ribosomal subunits, and thus maintains levels of free tRNAs and 50S ribosomes. This Pseudomonas aeruginosa (strain LESB58) protein is Peptidyl-tRNA hydrolase.